A 302-amino-acid chain; its full sequence is MTVIKTEPTTEVTLYSPPSKESLSKDDAHRKKQNNKPPSSINSRSGPNKHKLAAKAPEKKINNTDKQDLSAFLLNPSLIVKPSESKKKENIVAYNDTPGIKTEHTAFQPLTPISKKRALKEKAASEKCDSFDLSRDEKPYIQKKSKTLSSVTEINSSEYKLSLNGENTSSPAKEKSQEPIENPGSYQKTRNYLFEKPDPLDTCLQDYSSMLPSNVAEEDQEYFISVADSTLEEWTNKGQEIIDQQFQLYQEIIKKRIELSYKFKGIISVINDRADALEEQGQQLEGKIKKVKTLANEILNII.

Disordered regions lie at residues 1–67 (MTVI…TDKQ) and 162–187 (SLNG…GSYQ). Residues 35-46 (NKPPSSINSRSG) are compositionally biased toward polar residues. Basic and acidic residues predominate over residues 56–67 (APEKKINNTDKQ). Residues 162-171 (SLNGENTSSP) show a composition bias toward polar residues.

In terms of assembly, interacts with CDC6.

It localises to the nucleus. Its function is as follows. May be involved in cell wall organization and biogenesis. The chain is Protein ECM11 (ECM11) from Saccharomyces cerevisiae (strain ATCC 204508 / S288c) (Baker's yeast).